Here is a 254-residue protein sequence, read N- to C-terminus: RNA polymerase sigma-D factor (254 aa).

Residues 54-67 (DLMSLGMLGLYDAL) carry the Polymerase core binding motif. A DNA-binding region (H-T-H motif) is located at residues 220 to 239 (LTEIGQVLNLSTSRISQIHS).

In terms of assembly, monomer. Interacts transiently with the RNAP core.

Sigma factors are initiation factors that promote the attachment of RNA polymerase (RNAP) to specific initiation sites and are then released. This alternative sigma factor is required for the transcription of the flagellin and motility genes as well as for wild-type chemotaxis. Associates with the RNAP core during all growth phases with a peak at the transition to stationary phase. In Bacillus subtilis (strain 168), this protein is RNA polymerase sigma-D factor (sigD).